Reading from the N-terminus, the 319-residue chain is Transaldolase (319 aa).

The active-site Schiff-base intermediate with substrate is the Lys132.

This sequence belongs to the transaldolase family. Type 1 subfamily. Homodimer.

The protein resides in the cytoplasm. It carries out the reaction D-sedoheptulose 7-phosphate + D-glyceraldehyde 3-phosphate = D-erythrose 4-phosphate + beta-D-fructose 6-phosphate. The protein operates within carbohydrate degradation; pentose phosphate pathway; D-glyceraldehyde 3-phosphate and beta-D-fructose 6-phosphate from D-ribose 5-phosphate and D-xylulose 5-phosphate (non-oxidative stage): step 2/3. In terms of biological role, transaldolase is important for the balance of metabolites in the pentose-phosphate pathway. This chain is Transaldolase, found in Alteromonas mediterranea (strain DSM 17117 / CIP 110805 / LMG 28347 / Deep ecotype).